We begin with the raw amino-acid sequence, 415 residues long: Carboxypeptidase G2 (415 aa).

The N-terminal stretch at M1–T22 is a signal peptide. Position 112 (H112) interacts with Zn(2+). Residue D114 is part of the active site. D141 is a binding site for Zn(2+). Residue E175 is the Proton acceptor of the active site. Zn(2+)-binding residues include E176, E200, and H385.

It belongs to the peptidase M20A family. Homodimer. The cofactor is Zn(2+).

It carries out the reaction Release of C-terminal glutamate residues from a wide range of N-acylating moieties, including peptidyl, aminoacyl, benzoyl, benzyloxycarbonyl, folyl and pteroyl groups.. Catalyzes the hydrolysis of reduced and non-reduced folates to pteroates and L-glutamate. This enzyme has a broad specificity. The sequence is that of Carboxypeptidase G2 (cpg2) from Pseudomonas sp. (strain RS-16).